The chain runs to 574 residues: Glycine--tRNA ligase (574 aa).

Positions 96 and 162 each coordinate substrate. Residues 194–196, 204–209, 327–328, and 450–453 each bind ATP; these read RNE, IRLREF, EC, and GIDR. 209–213 lines the substrate pocket; the sequence is FTQAE. 446–450 contacts substrate; it reads EPSYG.

It belongs to the class-II aminoacyl-tRNA synthetase family.

It localises to the cytoplasm. The enzyme catalyses tRNA(Gly) + glycine + ATP = glycyl-tRNA(Gly) + AMP + diphosphate. Its function is as follows. Catalyzes the attachment of glycine to tRNA(Gly). The sequence is that of Glycine--tRNA ligase from Methanococcus maripaludis (strain C6 / ATCC BAA-1332).